We begin with the raw amino-acid sequence, 226 residues long: tRNA (guanine-N(7)-)-methyltransferase (226 aa).

3 residues coordinate S-adenosyl-L-methionine: Asp59, Glu84, and Asp111. Asp169 serves as a coordination point for substrate.

This sequence belongs to the class I-like SAM-binding methyltransferase superfamily. TrmB family.

The enzyme catalyses guanosine(46) in tRNA + S-adenosyl-L-methionine = N(7)-methylguanosine(46) in tRNA + S-adenosyl-L-homocysteine. The protein operates within tRNA modification; N(7)-methylguanine-tRNA biosynthesis. Functionally, catalyzes the formation of N(7)-methylguanine at position 46 (m7G46) in tRNA. This Chloroherpeton thalassium (strain ATCC 35110 / GB-78) protein is tRNA (guanine-N(7)-)-methyltransferase.